Consider the following 489-residue polypeptide: Betaine aldehyde dehydrogenase (489 aa).

The K(+) site is built by threonine 26 and aspartate 93. 150–152 (GAW) is an NAD(+) binding site. The Charge relay system role is filled by lysine 162. Residue 176 to 179 (KPSE) participates in NAD(+) binding. Valine 180 contacts K(+). 229 to 232 (GVET) contacts NAD(+). Leucine 245 lines the K(+) pocket. Glutamate 251 functions as the Proton acceptor in the catalytic mechanism. Residues glycine 253, cysteine 285, and glutamate 386 each contribute to the NAD(+) site. The Nucleophile role is filled by cysteine 285. At cysteine 285 the chain carries Cysteine sulfenic acid (-SOH). K(+)-binding residues include lysine 456 and glycine 459. Catalysis depends on glutamate 463, which acts as the Charge relay system.

This sequence belongs to the aldehyde dehydrogenase family. As to quaternary structure, dimer of dimers. The cofactor is K(+).

The catalysed reaction is betaine aldehyde + NAD(+) + H2O = glycine betaine + NADH + 2 H(+). It participates in amine and polyamine biosynthesis; betaine biosynthesis via choline pathway; betaine from betaine aldehyde: step 1/1. In terms of biological role, involved in the biosynthesis of the osmoprotectant glycine betaine. Catalyzes the irreversible oxidation of betaine aldehyde to the corresponding acid. The protein is Betaine aldehyde dehydrogenase of Burkholderia multivorans (strain ATCC 17616 / 249).